The following is a 308-amino-acid chain: Phosphoribosylaminoimidazole-succinocarboxamide synthase (308 aa).

Belongs to the SAICAR synthetase family.

It carries out the reaction 5-amino-1-(5-phospho-D-ribosyl)imidazole-4-carboxylate + L-aspartate + ATP = (2S)-2-[5-amino-1-(5-phospho-beta-D-ribosyl)imidazole-4-carboxamido]succinate + ADP + phosphate + 2 H(+). It functions in the pathway purine metabolism; IMP biosynthesis via de novo pathway; 5-amino-1-(5-phospho-D-ribosyl)imidazole-4-carboxamide from 5-amino-1-(5-phospho-D-ribosyl)imidazole-4-carboxylate: step 1/2. The polypeptide is Phosphoribosylaminoimidazole-succinocarboxamide synthase (Stenotrophomonas maltophilia (strain R551-3)).